A 167-amino-acid chain; its full sequence is Small heat shock protein C1 (167 aa).

The region spanning 59-167 is the sHSP domain; the sequence is SLYESNSIKS…EQEAREIVID (109 aa).

This sequence belongs to the small heat shock protein (HSP20) family.

The chain is Small heat shock protein C1 (hspC1) from Rickettsia conorii (strain ATCC VR-613 / Malish 7).